The following is a 291-amino-acid chain: Pituitary-specific positive transcription factor 1 (291 aa).

The 9aaTAD signature appears at 5 to 13; that stretch reads AFTSADTFI. The POU-specific domain occupies 124–198; the sequence is MDSPEIRELE…ILSKWLEEAE (75 aa). The segment at residues 214–273 is a DNA-binding region (homeobox); that stretch reads KRKRRTTISIAAKDALERHFGEQNKPSSQEIMRMAEELNLEKEVVRVWFCNRRQREKRVK.

It belongs to the POU transcription factor family. Class-1 subfamily. In terms of assembly, interacts with PITX1. Interacts with LHX3. Interacts with ELK1.

It localises to the nucleus. In terms of biological role, transcription factor involved in the specification of the lactotrope, somatotrope, and thyrotrope phenotypes in the developing anterior pituitary. Specifically binds to the consensus sequence 5'-TAAAT-3'. Activates growth hormone and prolactin genes. The chain is Pituitary-specific positive transcription factor 1 (POU1F1) from Homo sapiens (Human).